The primary structure comprises 191 residues: Ribosomal RNA small subunit methyltransferase G (191 aa).

Residues Gly62, Phe67, 111 to 112 (IE), and Arg124 contribute to the S-adenosyl-L-methionine site.

Belongs to the methyltransferase superfamily. RNA methyltransferase RsmG family.

Its subcellular location is the cytoplasm. It catalyses the reaction guanosine(527) in 16S rRNA + S-adenosyl-L-methionine = N(7)-methylguanosine(527) in 16S rRNA + S-adenosyl-L-homocysteine. Its function is as follows. Specifically methylates the N7 position of guanine in position 527 of 16S rRNA. The sequence is that of Ribosomal RNA small subunit methyltransferase G from Rickettsia akari (strain Hartford).